An 857-amino-acid polypeptide reads, in one-letter code: A-kinase anchor protein 1, mitochondrial (857 aa).

A mitochondrion-targeting transit peptide spans 1-29; it reads MAIQLRSLFPLALPGMLALLGWWWFFSRK. S55 bears the Phosphoserine mark. The tract at residues 65–121 is disordered; the sequence is VAPTVTQPPGREEQRCVDKPSTEPLALPRTRQVRRRSESSGNLPSVADTRSQPGPCR. Basic and acidic residues predominate over residues 74 to 85; sequence GREEQRCVDKPS. Phosphoserine occurs at positions 101, 103, and 164. The span at 103-116 shows a compositional bias: polar residues; the sequence is SSGNLPSVADTRSQ. Disordered stretches follow at residues 165-198 and 260-303; these read ALGK…GDAV and FVEP…VPEN. Over residues 286-299 the composition is skewed to basic and acidic residues; the sequence is SDRDLAGELDKDET. The tract at residues 306–319 is PKA-RII subunit binding domain; the sequence is IKQAAFQLISQVIL. Disordered stretches follow at residues 336 to 437, 466 to 497, and 512 to 554; these read QVHP…NPRG, STSG…TQPF, and EDGW…QAGS. Positions 354–379 are enriched in polar residues; that stretch reads PASQETSLGQDTSDPASTRTGATASP. Position 401 is a phosphothreonine (T401). Polar residues predominate over residues 466 to 482; it reads STSGLEDSCTETISSSG. T487 is subject to Phosphothreonine. A phosphoserine mark is found at S527 and S546. Over residues 545–554 the composition is skewed to polar residues; sequence DSPQSVQAGS. The 65-residue stretch at 561–625 folds into the KH domain; it reads LIIWEIEVPK…HHVDKALNLI (65 aa). The 60-residue stretch at 712-771 folds into the Tudor domain; it reads PVEITVICAAPGADGAWWRAQVVASYEETNEVEIRYVDYGGYKRVKVDVLRQIRSDFVTL.

Interacts with SLC8A3. Interacts with CFAP91. Interacts with CLPB. Interacts with NDUFS1. As to expression, highest expression in testis, heart, liver, skeletal muscle, intestine and kidney, followed by brain and lung. No expression in spleen. Isoform 1/D-AKAP1A is expressed predominantly in testis whereas isoform 4/D-AKAP1D is expressed primarily in liver. Expression is decreased in hearts of diabetic mice (at protein level).

It localises to the mitochondrion outer membrane. It is found in the mitochondrion. The protein resides in the endoplasmic reticulum. Differentially targeted protein that binds to type I and II regulatory subunits of protein kinase A. Anchors them to the cytoplasmic face of the mitochondrial outer membrane or allows them to reside in the endoplasmic reticulum. Involved in mitochondrial-mediated antiviral innate immunity. Promotes translocation of NDUFS1 into mitochondria to regulate mitochondrial membrane respiratory chain NADH dehydrogenase (Complex I) activity. Under diabetic conditions, myocardial AKAP1 expression decreases which blocks the translocation of NDUFS1 from the cytosol to mitochondria. Reduction of NDUFS1 in mitochondria decreases ATP production and increases mitochondrial ROS level, which causes mitochondrial dysfunction and cell apoptosis, respectively, thereby leading to cardiac dysfunction. The protein is A-kinase anchor protein 1, mitochondrial of Mus musculus (Mouse).